Reading from the N-terminus, the 150-residue chain is Large ribosomal subunit protein uL11 (150 aa).

This sequence belongs to the universal ribosomal protein uL11 family. Part of the ribosomal stalk of the 50S ribosomal subunit. Interacts with L10 and the large rRNA to form the base of the stalk. L10 forms an elongated spine to which L12 dimers bind in a sequential fashion forming a multimeric L10(L12)X complex. One or more lysine residues are methylated.

Its function is as follows. Forms part of the ribosomal stalk which helps the ribosome interact with GTP-bound translation factors. The chain is Large ribosomal subunit protein uL11 from Cereibacter sphaeroides (strain KD131 / KCTC 12085) (Rhodobacter sphaeroides).